The chain runs to 353 residues: Histidinol-phosphate aminotransferase (353 aa).

K209 is subject to N6-(pyridoxal phosphate)lysine.

It belongs to the class-II pyridoxal-phosphate-dependent aminotransferase family. Histidinol-phosphate aminotransferase subfamily. In terms of assembly, homodimer. The cofactor is pyridoxal 5'-phosphate.

It carries out the reaction L-histidinol phosphate + 2-oxoglutarate = 3-(imidazol-4-yl)-2-oxopropyl phosphate + L-glutamate. It participates in amino-acid biosynthesis; L-histidine biosynthesis; L-histidine from 5-phospho-alpha-D-ribose 1-diphosphate: step 7/9. The protein is Histidinol-phosphate aminotransferase of Buchnera aphidicola subsp. Cinara cedri (strain Cc).